The chain runs to 118 residues: Large ribosomal subunit protein bL19 (118 aa).

The protein belongs to the bacterial ribosomal protein bL19 family.

This protein is located at the 30S-50S ribosomal subunit interface and may play a role in the structure and function of the aminoacyl-tRNA binding site. In Saccharophagus degradans (strain 2-40 / ATCC 43961 / DSM 17024), this protein is Large ribosomal subunit protein bL19.